The following is a 166-amino-acid chain: NAD(P)H-quinone oxidoreductase subunit I, chloroplastic (166 aa).

4Fe-4S ferredoxin-type domains follow at residues Gly-55–Lys-84 and Leu-95–Glu-124. [4Fe-4S] cluster is bound by residues Cys-64, Cys-67, Cys-70, Cys-74, Cys-104, Cys-107, Cys-110, and Cys-114.

The protein belongs to the complex I 23 kDa subunit family. In terms of assembly, NDH is composed of at least 16 different subunits, 5 of which are encoded in the nucleus. [4Fe-4S] cluster is required as a cofactor.

It localises to the plastid. The protein resides in the chloroplast thylakoid membrane. It catalyses the reaction a plastoquinone + NADH + (n+1) H(+)(in) = a plastoquinol + NAD(+) + n H(+)(out). It carries out the reaction a plastoquinone + NADPH + (n+1) H(+)(in) = a plastoquinol + NADP(+) + n H(+)(out). NDH shuttles electrons from NAD(P)H:plastoquinone, via FMN and iron-sulfur (Fe-S) centers, to quinones in the photosynthetic chain and possibly in a chloroplast respiratory chain. The immediate electron acceptor for the enzyme in this species is believed to be plastoquinone. Couples the redox reaction to proton translocation, and thus conserves the redox energy in a proton gradient. The chain is NAD(P)H-quinone oxidoreductase subunit I, chloroplastic from Picradeniopsis absinthifolia (Hairyseed bahia).